We begin with the raw amino-acid sequence, 154 residues long: Bacterial ferritin (154 aa).

The region spanning 1 to 145 (MQGHPEVIDY…QQLGLIARMG (145 aa)) is the Ferritin-like diiron domain. Positions 18, 46, 47, 50, 51, 54, 93, 129, and 130 each coordinate Fe(3+).

Belongs to the bacterioferritin family. As to quaternary structure, the bacterioferritin (BFR) complex is formed of 24 subunits (FtnA and BfrB) arranged as 12 homodimers. The holocomplex contains about 8.7% Fe and 8.0% phosphate. In vivo purifies with BfrB in varying ratios, depending on the O(2) content; as O(2) decreases FtnA content rises. Pure FtnA BFR complexes are not isolated in situ, although in a bfrB deletion some iron will accumulate in FtnA ferritin complexes. Upon crystallization forms homooligomers of 24 subunits, the BFR complex, arranged as 12 dimers, that are packed together to form an approximately spherical molecule with a central cavity, in which large amounts of iron can be deposited. The BFR shell has three- and four-fold pores; Fe(2+) may move in and out of the shell via the four-fold pores. Does not interact with Bfd.

The protein localises to the cytoplasm. It catalyses the reaction 4 Fe(2+) + O2 + 4 H(+) = 4 Fe(3+) + 2 H2O. The enzyme catalyses Fe(2+)(in) = Fe(2+)(out). Its function is as follows. Plays a role in catalase A (katA) expression; activity is required for optimal KatA activity and resistance to H(2)O(2). Iron-storage protein that is part of the heterooligomeric bacterioferritin (BFR) complex. The ferroxidase center binds Fe(2+), oxidizes it using dioxygen to Fe(3+), and participates in subsequent Fe(3+) oxide mineral core formation within the central cavity of the BFR protein shell. Can store up to 520 iron atoms per ferritin protein molecule. Iron release requires only the input of electrons from ferredoxin NADP reductase (FPR), does not require Bfd. Does not bind heme. The chain is Bacterial ferritin from Pseudomonas aeruginosa (strain ATCC 15692 / DSM 22644 / CIP 104116 / JCM 14847 / LMG 12228 / 1C / PRS 101 / PAO1).